A 298-amino-acid polypeptide reads, in one-letter code: Estradiol 17-beta-dehydrogenase 11 (298 aa).

Positions Met-1–Ser-21 are cleaved as a signal peptide. Leu-40–Val-64 contacts NADP(+). Ser-172 serves as a coordination point for substrate. Residue Tyr-185 is the Proton acceptor of the active site.

The protein belongs to the short-chain dehydrogenases/reductases (SDR) family. 17-beta-HSD 3 subfamily.

The protein localises to the endoplasmic reticulum. Its subcellular location is the lipid droplet. The enzyme catalyses 17beta-estradiol + NAD(+) = estrone + NADH + H(+). It catalyses the reaction 17beta-estradiol + NADP(+) = estrone + NADPH + H(+). Functionally, can convert androstan-3-alpha,17-beta-diol (3-alpha-diol) to androsterone in vitro, suggesting that it may participate in androgen metabolism during steroidogenesis. May act by metabolizing compounds that stimulate steroid synthesis and/or by generating metabolites that inhibit it. Has no activity toward DHEA (dehydroepiandrosterone), or A-dione (4-androste-3,17-dione), and only a slight activity toward testosterone to A-dione. This is Estradiol 17-beta-dehydrogenase 11 (Hsd17b11) from Rattus norvegicus (Rat).